Consider the following 346-residue polypeptide: Heat-inducible transcription repressor HrcA (346 aa).

This sequence belongs to the HrcA family.

Functionally, negative regulator of class I heat shock genes (grpE-dnaK-dnaJ and groELS operons). Prevents heat-shock induction of these operons. This is Heat-inducible transcription repressor HrcA from Fructilactobacillus sanfranciscensis (Lactobacillus sanfranciscensis).